Here is an 838-residue protein sequence, read N- to C-terminus: 1,4-alpha-glucan branching enzyme GlgB 1 (838 aa).

The segment covering 1 to 11 has biased composition (basic and acidic residues); sequence MIPRPPSDDRA. Disordered regions lie at residues 1–98 and 116–142; these read MIPR…VSKK and PVSPAVAPDDRDRLLSGTHHAPHSVLG. The segment covering 29–57 has biased composition (low complexity); the sequence is KKAAAAKKTAGKKATPAAKATAAKGAVTK. Residue aspartate 513 is the Nucleophile of the active site. Residue glutamate 566 is the Proton donor of the active site. Residues 793–822 are disordered; the sequence is TDGARYGGSDVTNPHPVKPEPQGRHGRPAS.

The protein belongs to the glycosyl hydrolase 13 family. GlgB subfamily. In terms of assembly, monomer.

It carries out the reaction Transfers a segment of a (1-&gt;4)-alpha-D-glucan chain to a primary hydroxy group in a similar glucan chain.. Its pathway is glycan biosynthesis; glycogen biosynthesis. In terms of biological role, catalyzes the formation of the alpha-1,6-glucosidic linkages in glycogen by scission of a 1,4-alpha-linked oligosaccharide from growing alpha-1,4-glucan chains and the subsequent attachment of the oligosaccharide to the alpha-1,6 position. In Streptomyces avermitilis (strain ATCC 31267 / DSM 46492 / JCM 5070 / NBRC 14893 / NCIMB 12804 / NRRL 8165 / MA-4680), this protein is 1,4-alpha-glucan branching enzyme GlgB 1.